A 381-amino-acid chain; its full sequence is Chaperone protein DnaJ (381 aa).

The J domain occupies 5–70 (DFYEVLGVSR…QKKAAYDQYG (66 aa)). The segment at 136–214 (GVTKEIEVPT…CHGQGRKQKT (79 aa)) adopts a CR-type zinc-finger fold. Cysteine 149, cysteine 152, cysteine 166, cysteine 169, cysteine 188, cysteine 191, cysteine 202, and cysteine 205 together coordinate Zn(2+). 4 CXXCXGXG motif repeats span residues 149-156 (CDSCDGSG), 166-173 (CGTCHGHG), 188-195 (CPTCHGKG), and 202-209 (CNECHGQG).

The protein belongs to the DnaJ family. Homodimer. Requires Zn(2+) as cofactor.

The protein localises to the cytoplasm. In terms of biological role, participates actively in the response to hyperosmotic and heat shock by preventing the aggregation of stress-denatured proteins and by disaggregating proteins, also in an autonomous, DnaK-independent fashion. Unfolded proteins bind initially to DnaJ; upon interaction with the DnaJ-bound protein, DnaK hydrolyzes its bound ATP, resulting in the formation of a stable complex. GrpE releases ADP from DnaK; ATP binding to DnaK triggers the release of the substrate protein, thus completing the reaction cycle. Several rounds of ATP-dependent interactions between DnaJ, DnaK and GrpE are required for fully efficient folding. Also involved, together with DnaK and GrpE, in the DNA replication of plasmids through activation of initiation proteins. In Vibrio parahaemolyticus serotype O3:K6 (strain RIMD 2210633), this protein is Chaperone protein DnaJ.